We begin with the raw amino-acid sequence, 662 residues long: UvrABC system protein B (662 aa).

A Helicase ATP-binding domain is found at 31–188; that stretch reads DNIEGGEKAQ…NDLVDIQFER (158 aa). 44–51 is a binding site for ATP; sequence GATGTGKT. The Beta-hairpin signature appears at 97–120; sequence YYDYYQPEAYVPSSDTYIEKDSSV. Residues 435–601 form the Helicase C-terminal domain; the sequence is QIDDLLGEIN…TIKKEIRDLI (167 aa). The 36-residue stretch at 626-661 folds into the UVR domain; it reads KELVKKLEKQMQEAVEVLDFELAAQIRDMMLEVKAL.

The protein belongs to the UvrB family. As to quaternary structure, forms a heterotetramer with UvrA during the search for lesions. Interacts with UvrC in an incision complex.

The protein localises to the cytoplasm. In terms of biological role, the UvrABC repair system catalyzes the recognition and processing of DNA lesions. A damage recognition complex composed of 2 UvrA and 2 UvrB subunits scans DNA for abnormalities. Upon binding of the UvrA(2)B(2) complex to a putative damaged site, the DNA wraps around one UvrB monomer. DNA wrap is dependent on ATP binding by UvrB and probably causes local melting of the DNA helix, facilitating insertion of UvrB beta-hairpin between the DNA strands. Then UvrB probes one DNA strand for the presence of a lesion. If a lesion is found the UvrA subunits dissociate and the UvrB-DNA preincision complex is formed. This complex is subsequently bound by UvrC and the second UvrB is released. If no lesion is found, the DNA wraps around the other UvrB subunit that will check the other stand for damage. The polypeptide is UvrABC system protein B (Streptococcus pneumoniae (strain ATCC 700669 / Spain 23F-1)).